Here is a 1345-residue protein sequence, read N- to C-terminus: Vascular endothelial growth factor receptor 2 (1345 aa).

The signal sequence occupies residues 1–19 (MESKALLAVALWFCVETRA). At 20–762 (ASVGLPGDFL…EGAQEKTNLE (743 aa)) the chain is on the extracellular side. N46, N98, N145, N160, and N247 each carry an N-linked (GlcNAc...) asparagine glycan. 7 consecutive Ig-like C2-type domains span residues 46–111 (NTTL…RDVD), 143–209 (NKNK…INDE), 226–325 (YDVI…TFVR), 330–416 (PFIA…HMVS), 423–542 (PQIG…RVIS), 549–656 (PEIT…LVKQ), and 665–751 (PMIT…TLFI). Residues C53 and C105 are joined by a disulfide bond. A disulfide bond links C152 and C202. C248 and C309 are disulfide-bonded. N-linked (GlcNAc...) asparagine glycosylation is found at N320, N376, N397, N509, N521, N578, N611, N617, N629, N673, N702, and N719. 2 cysteine pairs are disulfide-bonded: C447–C528 and C569–C640. The cysteines at positions 686 and 735 are disulfide-linked. A helical membrane pass occupies residues 763-783 (VIILVGTAVIAMFFWLLLVIV). Residues 784-1345 (LRTVKRANEG…SGTTLRSPPV (562 aa)) are Cytoplasmic-facing. Y799 carries the post-translational modification Phosphotyrosine. A Protein kinase domain is found at 832–1160 (LKLGKPLGRG…FSELVEHLGN (329 aa)). Residues 838-846 (LGRGAFGQV) and K866 each bind ATP. Y949 bears the Phosphotyrosine; by autocatalysis mark. Phosphoserine is present on residues S980 and S982. Position 994 is a phosphotyrosine; by autocatalysis (Y994). A disulfide bridge links C1022 with C1043. D1026 functions as the Proton acceptor in the catalytic mechanism. Y1052, Y1057, Y1173, and Y1212 each carry phosphotyrosine; by autocatalysis. Residues S1229 and S1233 each carry the phosphoserine modification. T1236 bears the Phosphothreonine mark. The disordered stretch occupies residues 1272–1316 (DRNKLSPSFGGMMPSKSRESVASEGSNQTSGYQSGYHSDDTDTTV). Residues 1294–1307 (SEGSNQTSGYQSGY) are compositionally biased toward polar residues. A phosphotyrosine; by autocatalysis mark is found at Y1303, Y1307, and Y1317.

Belongs to the protein kinase superfamily. Tyr protein kinase family. CSF-1/PDGF receptor subfamily. In terms of assembly, homodimer in the presence of bound dimeric VEGFA, VEGFC or VEGFD ligands; monomeric in the absence of bound ligands. Can also form heterodimers with FLT1/VEGFR1 and KDR/VEGFR2. Interacts (tyrosine phosphorylated) with LFYN, NCK1, PLCG1. Interacts (tyrosine-phosphorylated active form preferentially) with DAB2IP (via C2 domain and active form preferentially); the interaction occurs at the late phase of VEGFA response and inhibits KDR/VEGFR2 activity. Interacts with SHBSH2D2A/TSAD, GRB2, MYOF, CBL and PDCD6. Interacts (via C-terminus domain) with ERN1 (via kinase domain); the interaction is facilitated in a XBP1 isoform 1- and vascular endothelial growth factor (VEGF)-dependent manner in endothelial cells. Interacts (via juxtamembrane region) with chaperone PDCL3 (via thioredoxin fold region); the interaction leads to increased KDR/VEGFR2 abundance through inhibition of its ubiquitination and degradation. Interacts (tyrosine phosphorylated) with CCDC88A/GIV (via SH2-like region); binding requires autophosphorylation of the KDR/VEGFR2 C-terminal region. Interacts with isoform 2 of BSG. Interacts with SLC31A1; this interaction is induced upon VEGFA stimulation leading to SLC31A1 and KDR subsequent co-internalization to early endosomes, thereby activating KDR downstream signaling in endothelial cells. In terms of processing, N-glycosylated. Ubiquitinated. Tyrosine phosphorylation of the receptor promotes its poly-ubiquitination, leading to its degradation via the proteasome or lysosomal proteases. Post-translationally, autophosphorylated on tyrosine residues upon ligand binding. Autophosphorylation occurs in trans, i.e. one subunit of the dimeric receptor phosphorylates tyrosine residues on the other subunit. Phosphorylation at Tyr-949 is important for interaction with SH2D2A/TSAD and VEGFA-mediated reorganization of the actin cytoskeleton. Phosphorylation at Tyr-1173 is important for interaction with PLCG1 and SHB. Phosphorylation at Tyr-1212 is important for interaction with NCK1 and FYN. Dephosphorylated by PTPRJ at Tyr-799, Tyr-949, Tyr-994, Tyr-1052, Tyr-1057, Tyr-1173 and Tyr-1212. In terms of processing, the inhibitory disulfide bond between Cys-1022 and Cys-1043 may serve as a specific molecular switch for H(2)S-induced modification that regulates KDR/VEGFR2 function. In terms of tissue distribution, expressed in endothelial cells (at protein level). Detected in embryonic endothelial cells, as well as hematopoietic stem and progenitor cells. Detected in vascular endothelium. Expressed at high levels in adult heart, lung, kidney, brain and skeletal muscle, but is also expressed at lower levels in most other adult tissues.

It localises to the cell junction. The protein resides in the endoplasmic reticulum. It is found in the cell membrane. Its subcellular location is the cytoplasm. The protein localises to the nucleus. It localises to the cytoplasmic vesicle. The protein resides in the early endosome. It is found in the secreted. It catalyses the reaction L-tyrosyl-[protein] + ATP = O-phospho-L-tyrosyl-[protein] + ADP + H(+). Present in an inactive conformation in the absence of bound ligand. Binding of VEGFA, VEGFC or VEGFD leads to dimerization and activation by autophosphorylation on tyrosine residues. May be regulated by hydrogen sulfide (H(2)S) levels via a sensitive intracellular disulfide bond. Its function is as follows. Tyrosine-protein kinase that acts as a cell-surface receptor for VEGFA, VEGFC and VEGFD. Plays an essential role in the regulation of angiogenesis, vascular development, vascular permeability, and embryonic hematopoiesis. Promotes proliferation, survival, migration and differentiation of endothelial cells. Promotes reorganization of the actin cytoskeleton. Isoforms lacking a transmembrane domain, such as isoform 2, may function as decoy receptors for VEGFA, VEGFC and/or VEGFD. Isoform 2 plays an important role as a negative regulator of VEGFA- and VEGFC-mediated lymphangiogenesis by limiting the amount of free VEGFA and/or VEGFC and by preventing their binding to FLT4. Modulates FLT1 and FLT4 signaling by forming heterodimers. Binding of vascular growth factors to isoform 1 leads to the activation of several signaling cascades. Activation of PLCG1 leads to the production of the cellular signaling molecules diacylglycerol and inositol 1,4,5-trisphosphate and the activation of protein kinase C. Mediates activation of MAPK1/ERK2, MAPK3/ERK1 and the MAP kinase signaling pathway, as well as of the AKT1 signaling pathway. Mediates phosphorylation of PIK3R1, the regulatory subunit of phosphatidylinositol 3-kinase, reorganization of the actin cytoskeleton and activation of PTK2/FAK1. Required for VEGFA-mediated induction of NOS2 and NOS3, leading to the production of the signaling molecule nitric oxide (NO) by endothelial cells. Phosphorylates PLCG1. Promotes phosphorylation of FYN, NCK1, NOS3, PIK3R1, PTK2/FAK1 and SRC. The chain is Vascular endothelial growth factor receptor 2 from Mus musculus (Mouse).